A 206-amino-acid chain; its full sequence is MAQTPLRIGIAGPVGSGKTALLEALCKALRQKYQLAVVTNDIYTQEDAQFLVRAEALTPDRILGVETGGCPHTAIREDASLNLAAIADLEARFMPLDMVFLESGGDNLAATFSPELVDLTLYVIDVAAGDKIPRKGGPGITKSDLLVINKIDLAPMVGADLGIMDRDAKKMRGEKPFVFTNLKTATGLSTVVDFVEHYLPTKVLAS.

Residue 12–19 (GPVGSGKT) participates in GTP binding.

Belongs to the SIMIBI class G3E GTPase family. UreG subfamily. Homodimer. UreD, UreF and UreG form a complex that acts as a GTP-hydrolysis-dependent molecular chaperone, activating the urease apoprotein by helping to assemble the nickel containing metallocenter of UreC. The UreE protein probably delivers the nickel.

It is found in the cytoplasm. Functionally, facilitates the functional incorporation of the urease nickel metallocenter. This process requires GTP hydrolysis, probably effectuated by UreG. This Synechocystis sp. (strain ATCC 27184 / PCC 6803 / Kazusa) protein is Urease accessory protein UreG.